Here is a 221-residue protein sequence, read N- to C-terminus: Glutathione S-transferase 1 (221 aa).

In terms of domain architecture, GST N-terminal spans 7–88 (QKMQLYSFSL…YLEEKFPENP (82 aa)). Glutathione contacts are provided by residues 17–22 (SSCAWR), valine 60, 72–73 (DS), glutamine 112, and 116–118 (NLA). Residues 93-221 (DLQKRALNYQ…ISPMLDEAKS (129 aa)) enclose the GST C-terminal domain.

It belongs to the GST superfamily. Zeta family.

It catalyses the reaction RX + glutathione = an S-substituted glutathione + a halide anion + H(+). Functionally, conjugation of reduced glutathione to a wide number of exogenous and endogenous hydrophobic electrophiles. This Dianthus caryophyllus (Carnation) protein is Glutathione S-transferase 1 (GST1).